The chain runs to 488 residues: Cardiolipin synthase 2 (488 aa).

The next 2 membrane-spanning stretches (helical) occupy residues 8–28 and 39–59; these read IIIN…AFII and IWAW…LYLL. 2 PLD phosphodiesterase domains span residues 223–250 and 401–428; these read MNNR…GDEY and DNGF…DNRS. Residues His-228, Lys-230, Asp-235, His-406, Lys-408, and Asp-413 contribute to the active site.

This sequence belongs to the phospholipase D family. Cardiolipin synthase subfamily.

The protein localises to the cell membrane. The enzyme catalyses 2 a 1,2-diacyl-sn-glycero-3-phospho-(1'-sn-glycerol) = a cardiolipin + glycerol. Functionally, catalyzes the reversible phosphatidyl group transfer from one phosphatidylglycerol molecule to another to form cardiolipin (CL) (diphosphatidylglycerol) and glycerol. This Staphylococcus epidermidis (strain ATCC 35984 / DSM 28319 / BCRC 17069 / CCUG 31568 / BM 3577 / RP62A) protein is Cardiolipin synthase 2 (cls2).